A 783-amino-acid chain; its full sequence is Coiled-coil domain-containing protein 30 (783 aa).

A compositionally biased stretch (basic and acidic residues) spans 1-22 (MSQEKNEMFESEWSKEREREKQ). Disordered regions lie at residues 1-26 (MSQE…LASG), 101-191 (LGGK…LTMK), and 209-231 (LLQS…SSGE). A coiled-coil region spans residues 22–98 (QLASGLDTAE…LSQEFAQLNH (77 aa)). Positions 106–115 (APSNLITSEN) are enriched in polar residues. Residues 131–191 (IQSRKEETEE…EEKEQQLTMK (61 aa)) are compositionally biased toward basic and acidic residues. Coiled coils occupy residues 165 to 497 (REGQ…LNVH) and 527 to 622 (DKRI…RIIR). The segment at 731-755 (EEIKSKEAMASSKSPEKSPENLVCS) is disordered.

It belongs to the prefoldin subunit beta family. Expressed in brain, kidney, pancreas, placenta, liver, thymus and prostate.

In Homo sapiens (Human), this protein is Coiled-coil domain-containing protein 30 (CCDC30).